The chain runs to 162 residues: Phenazine biosynthesis protein PhzA2 (162 aa).

The protein belongs to the PhzA/PhzB family.

It functions in the pathway antibiotic biosynthesis; phenazine biosynthesis. Functionally, involved in the biosynthesis of the antibiotic phenazine, a nitrogen-containing heterocyclic molecule having important roles in virulence, competition and biological control. PhzA2 (operon phzA2B2C2E2F2G2) has a role in the biosynthesis of the phenazine during both planktonic growth and biofilm development, and in host infection during biofilm development. This chain is Phenazine biosynthesis protein PhzA2, found in Pseudomonas aeruginosa (strain ATCC 15692 / DSM 22644 / CIP 104116 / JCM 14847 / LMG 12228 / 1C / PRS 101 / PAO1).